The primary structure comprises 418 residues: UDP-N-acetylglucosamine 1-carboxyvinyltransferase (418 aa).

23–24 (KN) is a binding site for phosphoenolpyruvate. R93 lines the UDP-N-acetyl-alpha-D-glucosamine pocket. Catalysis depends on D117, which acts as the Proton donor. UDP-N-acetyl-alpha-D-glucosamine contacts are provided by D305 and V327.

It belongs to the EPSP synthase family. MurA subfamily.

It localises to the cytoplasm. It carries out the reaction phosphoenolpyruvate + UDP-N-acetyl-alpha-D-glucosamine = UDP-N-acetyl-3-O-(1-carboxyvinyl)-alpha-D-glucosamine + phosphate. It participates in cell wall biogenesis; peptidoglycan biosynthesis. Cell wall formation. Adds enolpyruvyl to UDP-N-acetylglucosamine. The sequence is that of UDP-N-acetylglucosamine 1-carboxyvinyltransferase from Mycobacterium bovis (strain ATCC BAA-935 / AF2122/97).